Consider the following 220-residue polypeptide: Octanoyltransferase (220 aa).

The 176-residue stretch at Glu-34–Asn-209 folds into the BPL/LPL catalytic domain. Residues Arg-73–His-80, Ser-140–Gly-142, and Gly-153–Ala-155 each bind substrate. Cys-171 functions as the Acyl-thioester intermediate in the catalytic mechanism.

This sequence belongs to the LipB family.

It is found in the cytoplasm. It catalyses the reaction octanoyl-[ACP] + L-lysyl-[protein] = N(6)-octanoyl-L-lysyl-[protein] + holo-[ACP] + H(+). Its pathway is protein modification; protein lipoylation via endogenous pathway; protein N(6)-(lipoyl)lysine from octanoyl-[acyl-carrier-protein]: step 1/2. Catalyzes the transfer of endogenously produced octanoic acid from octanoyl-acyl-carrier-protein onto the lipoyl domains of lipoate-dependent enzymes. Lipoyl-ACP can also act as a substrate although octanoyl-ACP is likely to be the physiological substrate. The sequence is that of Octanoyltransferase from Shewanella piezotolerans (strain WP3 / JCM 13877).